The following is a 209-amino-acid chain: 8-oxoguanine DNA glycosylase/AP lyase (209 aa).

Catalysis depends on residues lysine 131 and aspartate 149.

This sequence belongs to the type-2 OGG1 family.

The enzyme catalyses 2'-deoxyribonucleotide-(2'-deoxyribose 5'-phosphate)-2'-deoxyribonucleotide-DNA = a 3'-end 2'-deoxyribonucleotide-(2,3-dehydro-2,3-deoxyribose 5'-phosphate)-DNA + a 5'-end 5'-phospho-2'-deoxyribonucleoside-DNA + H(+). Its function is as follows. Catalyzes the excision of an oxidatively damaged form of guanine (7,8-dihydro-8-oxoguanine = 8-oxoG) from DNA. Also cleaves the DNA backbone at apurinic/apyrimidinic sites (AP sites). The polypeptide is 8-oxoguanine DNA glycosylase/AP lyase (Korarchaeum cryptofilum (strain OPF8)).